We begin with the raw amino-acid sequence, 308 residues long: uncharacterized protein (308 aa).

In terms of domain architecture, HTH lysR-type spans 1-60; sequence MNYSLKQLKVFVTVAQEKSFSRAGERIGLSQSAVSHSVKELENHTGVRLLDRTTREVVLT. The H-T-H motif DNA-binding region spans 20–39; the sequence is FSRAGERIGLSQSAVSHSVK.

Belongs to the LysR transcriptional regulatory family.

This is an uncharacterized protein from Shigella flexneri.